Consider the following 610-residue polypeptide: Propanediol dehydratase-reactivating factor large subunit (610 aa).

N11–S13 contributes to the ATP binding site. Residues T105, D166, and D183 each coordinate Mg(2+). ATP is bound by residues E459–K462, G557–S558, and R591.

Belongs to the DdrA/PduG family. As to quaternary structure, forms a heterotetramer PduG(2)/PduH(2). Requires Mg(2+) as cofactor.

It localises to the bacterial microcompartment. It carries out the reaction ATP + H2O = ADP + phosphate + H(+). It functions in the pathway polyol metabolism; 1,2-propanediol degradation. Large subunit of the propanediol dehydratase-reactivating factor (DDR), which reactivates suicidally inhibited adenosylcobalamin-dependent propanediol dehydratase (diol dehydratase, DDH) found in the bacterial microcompartment (BMC) dedicated to 1,2-propanediol (1,2-PD) degradation. Reactivates inactivated DDH in the presence of ATP, Mg(2+) and free adenosylcobalamin (AdoCbl), by mediating the exchange of the tightly bound damaged cofactor AdoCbl for a free intact one. This subunit contains the adenosine nucleotide binding site. Its function is as follows. The 1,2-PD-specific bacterial microcompartment (BMC) concentrates low levels of 1,2-PD catabolic enzymes, concentrates volatile reaction intermediates thus enhancing pathway flux and keeps the level of toxic, mutagenic propionaldehyde low. This chain is Propanediol dehydratase-reactivating factor large subunit, found in Salmonella typhimurium (strain LT2 / SGSC1412 / ATCC 700720).